Reading from the N-terminus, the 91-residue chain is MALSLFTVGQLIFLFWTMRITEANPDPAAKAVPAAAAPDTASDAAAAAAATAATAAAAAAATAVTAAKAAALTAANAAAAAAATAAAAARG.

Positions 1-21 (MALSLFTVGQLIFLFWTMRIT) are cleaved as a signal peptide. Positions 22-39 (EANPDPAAKAVPAAAAPD) are cleaved as a propeptide — removed by a dipeptidylpeptidase.

Belongs to the type-I AFP family.

Its subcellular location is the secreted. In terms of biological role, contributes to protect fish blood from freezing at subzero sea water temperatures. Lowers the blood freezing point. Binds to nascent ice crystals and prevents further growth. The sequence is that of Ice-structuring protein from Pseudopleuronectes americanus (Winter flounder).